Reading from the N-terminus, the 295-residue chain is Small ribosomal subunit protein uS2 (295 aa).

Belongs to the universal ribosomal protein uS2 family. In terms of assembly, component of the small ribosomal subunit. Mature ribosomes consist of a small (40S) and a large (60S) subunit. The 40S subunit contains about 33 different proteins and 1 molecule of RNA (18S). The 60S subunit contains about 49 different proteins and 3 molecules of RNA (25S, 5.8S and 5S). Interacts with RPS21.

Its subcellular location is the cytoplasm. Functionally, required for the assembly and/or stability of the 40S ribosomal subunit. Required for the processing of the 20S rRNA-precursor to mature 18S rRNA in a late step of the maturation of 40S ribosomal subunits. The polypeptide is Small ribosomal subunit protein uS2 (Paracoccidioides brasiliensis (strain Pb18)).